The chain runs to 409 residues: Nucleoprotein (409 aa).

Disordered regions lie at residues 1–31, 44–84, 164–196, and 238–258; these read MASG…GSSG, LNSP…KGGR, RSGR…EDDL, and VDQV…DDKM. The span at 15-31 shows a compositional bias: low complexity; it reads PVIKLGGPKPPKVGSSG. The tract at residues 29–160 is RNA-binding; sequence SSGNVSWFQA…GNFRWDFIPL (132 aa). One can recognise a CoV N NTD domain in the interval 31-156; that stretch reads GNVSWFQAIK…GGPDGNFRWD (126 aa). Over residues 70–84 the composition is skewed to basic residues; the sequence is YWRRQARFKPGKGGR. Residues 166-179 show a composition bias toward low complexity; sequence GRSTAASSAASSRA. 2 stretches are compositionally biased toward basic and acidic residues: residues 180 to 192 and 247 to 258; these read PSRE…RSGS and KGKEGNFGDDKM. Phosphoserine; by host is present on residues S190 and S192. The CoV N CTD domain maps to 215–331; sequence TKAKADEMAH…QCVDGVGTRP (117 aa). The interval 226–333 is dimerization; sequence RYCKRTIPPN…VDGVGTRPKD (108 aa). A disulfide bridge links C320 with C323. The disordered stretch occupies residues 326–409; it reads GVGTRPKDDE…GDSALGENEL (84 aa). A compositionally biased stretch (basic residues) spans 358–367; that stretch reads QRPKKEKKPK. Residues 368–384 show a composition bias toward basic and acidic residues; that stretch reads KQDDEVDKALTSDEERN. T378 bears the Phosphothreonine; by host mark. Position 379 is a phosphoserine; by host (S379).

The protein belongs to the gammacoronavirus nucleocapsid protein family. In terms of assembly, homooligomer. Both monomeric and oligomeric forms interact with RNA. Interacts with protein M. Interacts with NSP3; this interaction serves to tether the genome to the newly translated replicase-transcriptase complex at a very early stage of infection. In terms of processing, ADP-ribosylated. The ADP-ribosylation is retained in the virion during infection. Post-translationally, phosphorylated on serine and threonine residues.

It localises to the virion. Its subcellular location is the host endoplasmic reticulum-Golgi intermediate compartment. The protein resides in the host Golgi apparatus. Packages the positive strand viral genome RNA into a helical ribonucleocapsid (RNP) and plays a fundamental role during virion assembly through its interactions with the viral genome and membrane protein M. Plays an important role in enhancing the efficiency of subgenomic viral RNA transcription as well as viral replication. This chain is Nucleoprotein, found in Gallus gallus (Chicken).